We begin with the raw amino-acid sequence, 306 residues long: D-alanine--D-alanine ligase (306 aa).

Residues K105 to E300 enclose the ATP-grasp domain. An ATP-binding site is contributed by T131–T186. Residues D254, E267, and N269 each coordinate Mg(2+).

The protein belongs to the D-alanine--D-alanine ligase family. Mg(2+) is required as a cofactor. Requires Mn(2+) as cofactor.

It is found in the cytoplasm. It catalyses the reaction 2 D-alanine + ATP = D-alanyl-D-alanine + ADP + phosphate + H(+). The protein operates within cell wall biogenesis; peptidoglycan biosynthesis. In terms of biological role, cell wall formation. The protein is D-alanine--D-alanine ligase of Nitrosomonas eutropha (strain DSM 101675 / C91 / Nm57).